The chain runs to 459 residues: Transcription factor mlcR (459 aa).

The zn(2)-C6 fungal-type DNA-binding region spans 21-53 (CDRCHAQKLKCTGSNANLVRAQCQRCQQAGLRC). Disordered regions lie at residues 64 to 84 (LHKE…PMTA) and 135 to 170 (DPES…DFEG). Residues 69–78 (AAGTTRATET) show a composition bias toward low complexity.

It localises to the nucleus. In terms of biological role, transcription factor that regulates the gene cluster that mediates the biosynthesis of compactin, also known as mevastatin or ML-236B, and which acts as a potent competitive inhibitor of HMG-CoA reductase. Binds to the consensus-binding motif 5'-WCGG-N(6)-TCGG-3' of target genes. This chain is Transcription factor mlcR, found in Penicillium citrinum.